We begin with the raw amino-acid sequence, 477 residues long: Ribulose bisphosphate carboxylase large chain (477 aa).

Positions 1-2 are excised as a propeptide; it reads MS. At Pro3 the chain carries N-acetylproline. Lys14 carries the N6,N6,N6-trimethyllysine modification. Asn123 and Thr173 together coordinate substrate. Lys175 acts as the Proton acceptor in catalysis. Position 177 (Lys177) interacts with substrate. Mg(2+)-binding residues include Lys201, Asp203, and Glu204. Lys201 bears the N6-carboxylysine mark. Catalysis depends on His294, which acts as the Proton acceptor. Positions 295, 327, and 379 each coordinate substrate.

This sequence belongs to the RuBisCO large chain family. Type I subfamily. As to quaternary structure, heterohexadecamer of 8 large chains and 8 small chains; disulfide-linked. The disulfide link is formed within the large subunit homodimers. It depends on Mg(2+) as a cofactor. The disulfide bond which can form in the large chain dimeric partners within the hexadecamer appears to be associated with oxidative stress and protein turnover.

It localises to the plastid. It is found in the chloroplast. It carries out the reaction 2 (2R)-3-phosphoglycerate + 2 H(+) = D-ribulose 1,5-bisphosphate + CO2 + H2O. The catalysed reaction is D-ribulose 1,5-bisphosphate + O2 = 2-phosphoglycolate + (2R)-3-phosphoglycerate + 2 H(+). Its function is as follows. RuBisCO catalyzes two reactions: the carboxylation of D-ribulose 1,5-bisphosphate, the primary event in carbon dioxide fixation, as well as the oxidative fragmentation of the pentose substrate in the photorespiration process. Both reactions occur simultaneously and in competition at the same active site. This chain is Ribulose bisphosphate carboxylase large chain, found in Solanum bulbocastanum (Wild potato).